A 740-amino-acid chain; its full sequence is Catalase-peroxidase (740 aa).

The segment covering methionine 1–glutamate 16 has biased composition (basic and acidic residues). Positions methionine 1 to glutamine 38 are disordered. A cross-link (tryptophyl-tyrosyl-methioninium (Trp-Tyr) (with M-257)) is located at residues tryptophan 108–tyrosine 231. Catalysis depends on histidine 109, which acts as the Proton acceptor. A cross-link (tryptophyl-tyrosyl-methioninium (Tyr-Met) (with W-108)) is located at residues tyrosine 231–methionine 257. Residue histidine 272 coordinates heme b.

This sequence belongs to the peroxidase family. Peroxidase/catalase subfamily. In terms of assembly, homodimer. Heme b is required as a cofactor. Post-translationally, formation of the three residue Trp-Tyr-Met cross-link is important for the catalase, but not the peroxidase activity of the enzyme.

It catalyses the reaction H2O2 + AH2 = A + 2 H2O. The enzyme catalyses 2 H2O2 = O2 + 2 H2O. Bifunctional enzyme with both catalase and broad-spectrum peroxidase activity. This is Catalase-peroxidase from Streptomyces coelicolor (strain ATCC BAA-471 / A3(2) / M145).